A 465-amino-acid chain; its full sequence is MLPLVALVGRPNVGKSTIFNALTRTRDALVHDQPGVTRDRNYGVCRLDEDNHFLVVDTGGIAEEEEGLAGATTRQARAAAAEADLILFVVDARDGSSAMDDEILAWLRKLSRPTLLLINKIDGTDEDSVRSEFARYGFSEMLTVSAAHRQGLDDLLEEVVQRLPEEGSGEELDNDPNRIRIAFVGRPNVGKSTLVNRILGEERMIASDVPGTTRDSIAVDLERDGREYRLIDTAGLRRRSRVDEVVEKFSVVKTMQSIEQCQVAVLMLDATEGVTDQDATVLGAVLDAGRALVIAINKWDGLTEYQREQAETMLSLRLGFVPWAESVRISAKHGSGLRELFRAVHRAHESANKTFTTSEVNKALEVAYETNPPPTIRGHVSKLRYVHPAGANPPTFIVHGTRLKELQESYKRYLENFFRKRFKLIGTPVSFIFREGTNPYEGKKNVLTERQVKAKRRLMKHVKGK.

EngA-type G domains lie at 3 to 167 (PLVA…PEEG) and 179 to 352 (IRIA…ESAN). Residues 9–16 (GRPNVGKS), 57–61 (DTGGI), 119–122 (NKID), 185–192 (GRPNVGKS), 232–236 (DTAGL), and 297–300 (NKWD) each bind GTP. The region spanning 353 to 437 (KTFTTSEVNK…PVSFIFREGT (85 aa)) is the KH-like domain.

The protein belongs to the TRAFAC class TrmE-Era-EngA-EngB-Septin-like GTPase superfamily. EngA (Der) GTPase family. Associates with the 50S ribosomal subunit.

In terms of biological role, GTPase that plays an essential role in the late steps of ribosome biogenesis. The chain is GTPase Der from Stenotrophomonas maltophilia (strain R551-3).